A 184-amino-acid chain; its full sequence is Protein GrpE (184 aa).

The span at 1–14 shows a compositional bias: polar residues; that stretch reads MANEQNEQSQDLSS. The interval 1-35 is disordered; sequence MANEQNEQSQDLSSEQTTQDHEQTQTEGVEQGAEI.

This sequence belongs to the GrpE family. As to quaternary structure, homodimer.

It localises to the cytoplasm. In terms of biological role, participates actively in the response to hyperosmotic and heat shock by preventing the aggregation of stress-denatured proteins, in association with DnaK and GrpE. It is the nucleotide exchange factor for DnaK and may function as a thermosensor. Unfolded proteins bind initially to DnaJ; upon interaction with the DnaJ-bound protein, DnaK hydrolyzes its bound ATP, resulting in the formation of a stable complex. GrpE releases ADP from DnaK; ATP binding to DnaK triggers the release of the substrate protein, thus completing the reaction cycle. Several rounds of ATP-dependent interactions between DnaJ, DnaK and GrpE are required for fully efficient folding. This chain is Protein GrpE, found in Acinetobacter baylyi (strain ATCC 33305 / BD413 / ADP1).